We begin with the raw amino-acid sequence, 598 residues long: MDNKKIRNFAIIAHIDHGKSTLADRILEFTNTVSKRDLKEQHLDSMDLEKERGITIKLNAVQIRYNSYIFHLIDTPGHVDFTYEVSRSLAATEGALLLVDASQGIQAQTLANVYLALENNLEIIPIINKIDLPSANVDKVKAEIENTIGISAENAILISAKNGIGIEKVLEAIVNLIPPPQASDEKDPLKALVFDSYFDIYRGVIIFIRVVTGKISVGDTFKFMANNLKFSVIELGISSPNQVKKEALFAGEVGWVAASIRNAKDVEVGDTITLVENPAKSPLPGYKKLVPVMYTGFYPVDSQQYNLLKDSLEKISLSDSSIIYEPESSKALGFGFRIGFLGLLHMEILQERLEREFNLSIIATAPSVEFQITRTNGQVQIISNPSLFPEPNFISEIREPYILAKIFLPEEFLGQIMGLCQDKRGIYVDLEYIDDFRRRLIYKLPLVEVIFDFFDRLKSLSKGYASFEYEVIDYQVSKLQKLDILLNGQKIDALSMIVHKDFAYPKARDLTQKLKEIIPRHSFEVPVQAVIGSKVIARETIKAYRKDVTAKLYGGDVTRRKKLLEKQKAGKKRMKSFGVVDVPQEAFLAILKTNVSEK.

The tr-type G domain occupies 4–181; that stretch reads KKIRNFAIIA…AIVNLIPPPQ (178 aa). GTP contacts are provided by residues 16–21 and 128–131; these read DHGKST and NKID.

Belongs to the TRAFAC class translation factor GTPase superfamily. Classic translation factor GTPase family. LepA subfamily.

Its subcellular location is the cell membrane. The catalysed reaction is GTP + H2O = GDP + phosphate + H(+). Its function is as follows. Required for accurate and efficient protein synthesis under certain stress conditions. May act as a fidelity factor of the translation reaction, by catalyzing a one-codon backward translocation of tRNAs on improperly translocated ribosomes. Back-translocation proceeds from a post-translocation (POST) complex to a pre-translocation (PRE) complex, thus giving elongation factor G a second chance to translocate the tRNAs correctly. Binds to ribosomes in a GTP-dependent manner. The protein is Elongation factor 4 of Mesomycoplasma hyopneumoniae (strain J / ATCC 25934 / NCTC 10110) (Mycoplasma hyopneumoniae).